Consider the following 267-residue polypeptide: Orotidine 5'-phosphate decarboxylase (267 aa).

Substrate-binding positions include Asp-40, Lys-62–His-64, Asp-93–Thr-102, Tyr-215, and Arg-234. The active-site Proton donor is the Lys-95.

The protein belongs to the OMP decarboxylase family.

The enzyme catalyses orotidine 5'-phosphate + H(+) = UMP + CO2. It participates in pyrimidine metabolism; UMP biosynthesis via de novo pathway; UMP from orotate: step 2/2. The protein is Orotidine 5'-phosphate decarboxylase (pyrG) of Phycomyces blakesleeanus (strain ATCC 8743b / DSM 1359 / FGSC 10004 / NBRC 33097 / NRRL 1555).